A 740-amino-acid chain; its full sequence is Polyribonucleotide nucleotidyltransferase (740 aa).

Residues Asp-496 and Asp-502 each coordinate Mg(2+). The 60-residue stretch at 563 to 622 (PAIIRTSIHPDKIRDIIGPGGKIIKKLVEETGADIDIEDDGRVFIAAVDREKGKRALEII) folds into the KH domain. Residues 632–706 (GKLYNGKVTR…QQGRLKLSKK (75 aa)) enclose the S1 motif domain. The disordered stretch occupies residues 707 to 740 (EAMRDMGLAPAESTSEQPEKRERRPFSRPKATKE). The span at 723-740 (QPEKRERRPFSRPKATKE) shows a compositional bias: basic and acidic residues.

Belongs to the polyribonucleotide nucleotidyltransferase family. It depends on Mg(2+) as a cofactor.

The protein resides in the cytoplasm. The enzyme catalyses RNA(n+1) + phosphate = RNA(n) + a ribonucleoside 5'-diphosphate. Functionally, involved in mRNA degradation. Catalyzes the phosphorolysis of single-stranded polyribonucleotides processively in the 3'- to 5'-direction. This is Polyribonucleotide nucleotidyltransferase from Desulforamulus reducens (strain ATCC BAA-1160 / DSM 100696 / MI-1) (Desulfotomaculum reducens).